A 515-amino-acid polypeptide reads, in one-letter code: Maturase K (515 aa).

The protein belongs to the intron maturase 2 family. MatK subfamily.

It is found in the plastid. The protein localises to the chloroplast. Usually encoded in the trnK tRNA gene intron. Probably assists in splicing its own and other chloroplast group II introns. The polypeptide is Maturase K (Trillium luteum (Yellow wakerobin)).